The sequence spans 731 residues: Catalase-peroxidase (731 aa).

A cross-link (tryptophyl-tyrosyl-methioninium (Trp-Tyr) (with M-254)) is located at residues 98-227; it reads WHAAGTYRTA…LAAIQMGLIY (130 aa). His-99 (proton acceptor) is an active-site residue. Residues 227–254 constitute a cross-link (tryptophyl-tyrosyl-methioninium (Tyr-Met) (with W-98)); that stretch reads YVNPEGPQGNPHDDEGMARDMKETFKRM. His-269 is a binding site for heme b.

The protein belongs to the peroxidase family. Peroxidase/catalase subfamily. As to quaternary structure, homodimer or homotetramer. Requires heme b as cofactor. Formation of the three residue Trp-Tyr-Met cross-link is important for the catalase, but not the peroxidase activity of the enzyme.

It catalyses the reaction H2O2 + AH2 = A + 2 H2O. The catalysed reaction is 2 H2O2 = O2 + 2 H2O. Bifunctional enzyme with both catalase and broad-spectrum peroxidase activity. This is Catalase-peroxidase from Sphingopyxis alaskensis (strain DSM 13593 / LMG 18877 / RB2256) (Sphingomonas alaskensis).